We begin with the raw amino-acid sequence, 275 residues long: Rhamnulose-1-phosphate aldolase (275 aa).

Glutamate 117 is an active-site residue. 3 residues coordinate Zn(2+): histidine 141, histidine 143, and histidine 212.

Belongs to the aldolase class II family. RhaD subfamily. As to quaternary structure, homotetramer. The cofactor is Zn(2+).

It localises to the cytoplasm. The catalysed reaction is L-rhamnulose 1-phosphate = (S)-lactaldehyde + dihydroxyacetone phosphate. Its pathway is carbohydrate degradation; L-rhamnose degradation; glycerone phosphate from L-rhamnose: step 3/3. Catalyzes the reversible cleavage of L-rhamnulose-1-phosphate to dihydroxyacetone phosphate (DHAP) and L-lactaldehyde. This is Rhamnulose-1-phosphate aldolase from Citrobacter koseri (strain ATCC BAA-895 / CDC 4225-83 / SGSC4696).